Consider the following 225-residue polypeptide: PKHD-type hydroxylase YbiX (225 aa).

The Fe2OG dioxygenase domain maps to 78-177; sequence TLSTPLFNRY…RVASFMWIQS (100 aa). Fe cation-binding residues include histidine 96, aspartate 98, and histidine 158. 2-oxoglutarate is bound at residue arginine 168.

Fe(2+) serves as cofactor. Requires L-ascorbate as cofactor.

The sequence is that of PKHD-type hydroxylase YbiX from Escherichia coli O8 (strain IAI1).